Consider the following 222-residue polypeptide: MVLRSEILVNKNVMPTAEQALPGRETPMSLPEFHYVFEGTPLLGPFFEGAIDFAIFGLGCFWGAERRFWQREGVVSTVVGYAGGFTPHPTYEEVCSGLTGHTEVVLVVFDKDKVSYRELLAMFWELHNPTQGMRQGNDVGTQYRSAIYCTSPEQLEQAEASRDAFQAELSKAGFGEITTEIDQAPTVYFAEAYHQQYLAKNPQGYCGIGGTGVCLPPSLQGN.

C60 is an active-site residue.

It belongs to the MsrA Met sulfoxide reductase family.

The catalysed reaction is L-methionyl-[protein] + [thioredoxin]-disulfide + H2O = L-methionyl-(S)-S-oxide-[protein] + [thioredoxin]-dithiol. It carries out the reaction [thioredoxin]-disulfide + L-methionine + H2O = L-methionine (S)-S-oxide + [thioredoxin]-dithiol. In terms of biological role, has an important function as a repair enzyme for proteins that have been inactivated by oxidation. Catalyzes the reversible oxidation-reduction of methionine sulfoxide in proteins to methionine. The chain is Peptide methionine sulfoxide reductase MsrA from Pseudomonas putida (strain GB-1).